The primary structure comprises 418 residues: Putative ion-transport protein YfeO (418 aa).

12 helical membrane-spanning segments follow: residues 10-30 (LLLS…LIVV), 54-74 (DSPF…GLVI), 99-119 (ALPG…SLGP), 120-140 (EHPI…RLLP), 149-169 (ILAS…AALI), 186-206 (LFAP…FFHP), 223-243 (ILSG…AVWC), 258-278 (VLML…AGPV), 300-320 (DYFL…ASGF), 322-342 (GGRI…LHEH), 343-363 (VPAV…VLVV), and 371-391 (LFMA…CIVM).

This sequence belongs to the chloride channel (TC 2.A.49) family.

It localises to the cell membrane. This Escherichia coli O7:K1 (strain IAI39 / ExPEC) protein is Putative ion-transport protein YfeO.